The chain runs to 273 residues: Putative esterase/lipase 3 (273 aa).

Residue H34 is part of the active site. Catalysis depends on S100, which acts as the Charge relay system.

This sequence belongs to the lipase/esterase LIP3/BchO family.

The polypeptide is Putative esterase/lipase 3 (Mycoplasma genitalium (strain ATCC 33530 / DSM 19775 / NCTC 10195 / G37) (Mycoplasmoides genitalium)).